Here is a 99-residue protein sequence, read N- to C-terminus: Photosystem II reaction center Psb28 protein (99 aa).

The protein belongs to the Psb28 family. In terms of assembly, part of the photosystem II complex.

The protein localises to the cell inner membrane. The sequence is that of Photosystem II reaction center Psb28 protein from Gloeobacter violaceus (strain ATCC 29082 / PCC 7421).